Reading from the N-terminus, the 922-residue chain is Phosphoenolpyruvate carboxylase (922 aa).

The segment at 1–20 is disordered; it reads MTKTLHARPSAATDTTFAPP. Catalysis depends on residues His-142 and Lys-581.

It belongs to the PEPCase type 1 family. Mg(2+) serves as cofactor.

The enzyme catalyses oxaloacetate + phosphate = phosphoenolpyruvate + hydrogencarbonate. Its function is as follows. Forms oxaloacetate, a four-carbon dicarboxylic acid source for the tricarboxylic acid cycle. The protein is Phosphoenolpyruvate carboxylase (ppc) of Methylorubrum extorquens (strain ATCC 14718 / DSM 1338 / JCM 2805 / NCIMB 9133 / AM1) (Methylobacterium extorquens).